The chain runs to 119 residues: Protein TusC (119 aa).

It belongs to the DsrF/TusC family. In terms of assembly, heterohexamer, formed by a dimer of trimers. The hexameric TusBCD complex contains 2 copies each of TusB, TusC and TusD. The TusBCD complex interacts with TusE.

Its subcellular location is the cytoplasm. Functionally, part of a sulfur-relay system required for 2-thiolation of 5-methylaminomethyl-2-thiouridine (mnm(5)s(2)U) at tRNA wobble positions. This chain is Protein TusC, found in Sodalis glossinidius (strain morsitans).